The sequence spans 61 residues: Large ribosomal subunit protein bL32 (61 aa).

Residues 1 to 19 (MAHPKRRQSKTRTAKRRTH) show a composition bias toward basic residues. Residues 1-20 (MAHPKRRQSKTRTAKRRTHD) form a disordered region.

The protein belongs to the bacterial ribosomal protein bL32 family.

This Porphyromonas gingivalis (strain ATCC 33277 / DSM 20709 / CIP 103683 / JCM 12257 / NCTC 11834 / 2561) protein is Large ribosomal subunit protein bL32.